The following is a 255-amino-acid chain: 1-(5-phosphoribosyl)-5-[(5-phosphoribosylamino)methylideneamino] imidazole-4-carboxamide isomerase (255 aa).

Residue D8 is the Proton acceptor of the active site. Residue D129 is the Proton donor of the active site.

Belongs to the HisA/HisF family.

The protein resides in the cytoplasm. The catalysed reaction is 1-(5-phospho-beta-D-ribosyl)-5-[(5-phospho-beta-D-ribosylamino)methylideneamino]imidazole-4-carboxamide = 5-[(5-phospho-1-deoxy-D-ribulos-1-ylimino)methylamino]-1-(5-phospho-beta-D-ribosyl)imidazole-4-carboxamide. The protein operates within amino-acid biosynthesis; L-histidine biosynthesis; L-histidine from 5-phospho-alpha-D-ribose 1-diphosphate: step 4/9. The sequence is that of 1-(5-phosphoribosyl)-5-[(5-phosphoribosylamino)methylideneamino] imidazole-4-carboxamide isomerase from Prochlorococcus marinus (strain AS9601).